The chain runs to 270 residues: Phosphatidylinositol transfer protein alpha isoform (270 aa).

Residues T58, K60, E85, N89, T96, and K194 each contribute to the a 1,2-diacyl-sn-glycero-3-phospho-(1D-myo-inositol) site. K215 carries the N6-acetyllysine modification. Residues 250–263 show a composition bias toward basic and acidic residues; that stretch reads TKRQLDEMRQKDPV. Residues 250–270 are disordered; sequence TKRQLDEMRQKDPVKGMTADD.

It belongs to the PtdIns transfer protein family. PI transfer class I subfamily.

It localises to the cytoplasm. The protein localises to the nucleus. The catalysed reaction is a 1,2-diacyl-sn-glycero-3-phosphocholine(in) = a 1,2-diacyl-sn-glycero-3-phosphocholine(out). The enzyme catalyses a 1,2-diacyl-sn-glycero-3-phospho-(1D-myo-inositol)(in) = a 1,2-diacyl-sn-glycero-3-phospho-(1D-myo-inositol)(out). With respect to regulation, phosphatidylinositol transfer activity is inhibited by N-ethylmaleimide. Functionally, catalyzes the transfer of phosphatidylinositol (PI) and phosphatidylcholine (PC) between membranes. Shows a preference for PI and PC containing shorter saturated or monosaturated acyl chains at the sn-1 and sn-2 positions. Preference order for PC is C16:1 &gt; C16:0 &gt; C18:1 &gt; C18:0 &gt; C20:4 and for PI is C16:1 &gt; C16:0 &gt; C18:1 &gt; C18:0 &gt; C20:4 &gt; C20:3. This is Phosphatidylinositol transfer protein alpha isoform (PITPNA) from Homo sapiens (Human).